Here is a 148-residue protein sequence, read N- to C-terminus: Large ribosomal subunit protein bL9 (148 aa).

Belongs to the bacterial ribosomal protein bL9 family.

Its function is as follows. Binds to the 23S rRNA. This chain is Large ribosomal subunit protein bL9, found in Desulfitobacterium hafniense (strain DSM 10664 / DCB-2).